The sequence spans 369 residues: Flagellar P-ring protein (369 aa).

The N-terminal stretch at 1-22 is a signal peptide; the sequence is MFNARRLIAATLLMSCAFGAHA.

The protein belongs to the FlgI family. The basal body constitutes a major portion of the flagellar organelle and consists of four rings (L,P,S, and M) mounted on a central rod.

Its subcellular location is the periplasm. The protein localises to the bacterial flagellum basal body. Functionally, assembles around the rod to form the L-ring and probably protects the motor/basal body from shearing forces during rotation. In Pseudomonas entomophila (strain L48), this protein is Flagellar P-ring protein.